The following is a 183-amino-acid chain: Negative modulator of initiation of replication (183 aa).

An interaction with DNA region spans residues 90-91 (AV).

Belongs to the SeqA family. As to quaternary structure, homodimer. Polymerizes to form helical filaments.

It localises to the cytoplasm. Negative regulator of replication initiation, which contributes to regulation of DNA replication and ensures that replication initiation occurs exactly once per chromosome per cell cycle. Binds to pairs of hemimethylated GATC sequences in the oriC region, thus preventing assembly of replication proteins and re-initiation at newly replicated origins. Repression is relieved when the region becomes fully methylated. The polypeptide is Negative modulator of initiation of replication (Shewanella oneidensis (strain ATCC 700550 / JCM 31522 / CIP 106686 / LMG 19005 / NCIMB 14063 / MR-1)).